Consider the following 1154-residue polypeptide: Voltage-gated inwardly rectifying potassium channel KCNH2 (1154 aa).

At 1–403 (MPVRRGHVAP…RIHRWTILHY (403 aa)) the chain is on the cytoplasmic side. The region spanning 41–70 (VIYCNDGFCELCGYSRAEVMQRPCTCDFLH) is the PAS domain. The PAC domain maps to 92–144 (RKVEIAFYRKDGSCFLCLVDVVPVKNEDGAVIMFILNFEVVMEKDMVGSPARD). Residues 233-312 (ALVGSGSPPA…ASTGAMHPLR (80 aa)) form a disordered region. S239 bears the Phosphoserine mark. Polar residues predominate over residues 258-269 (PDGSGSSCSLAR). S283, S284, S320, and S351 each carry phosphoserine. Residues 404-424 (SPFKAVWDWLILLLVIYTAVF) form a helical membrane-spanning segment. At 425 to 450 (TPYSAAFLLKETEEGSQAPDCGYACQ) the chain is on the extracellular side. The chain crosses the membrane as a helical span at residues 451–471 (PLAVVDLIVDIMFIVDILINF). Residues 472-495 (RTTYVNANEEVVSHPGRIAVHYFK) lie on the Cytoplasmic side of the membrane. Residues 496–516 (GWFLIDMVAAIPFDLLIFGSG) form a helical membrane-spanning segment. Residues 517 to 520 (SEEL) lie on the Extracellular side of the membrane. The helical; Voltage-sensor transmembrane segment at 521–541 (IGLLKTARLLRLVRVARKLDR) threads the bilayer. Residues 542–547 (YSEYGA) are Cytoplasmic-facing. Residues 548–568 (AVLFLLMCTFALIAHWLACIW) form a helical membrane-spanning segment. Residues 569–611 (YAIGNMEQPNMDSHIGWLHNLGDQIGKPYNSSGLGGPSIKDKY) are Extracellular-facing. Residues 612–632 (VTALYFTFSSLTSVGFGNVSP) constitute an intramembrane region (pore-forming). The Selectivity filter signature appears at 624-629 (SVGFGN). Residues 633–638 (NTNSEK) lie on the Extracellular side of the membrane. Residues 639–659 (IFSICVMLIGSLMYASIFGNV) traverse the membrane as a helical segment. Over 660–1154 (SAIIQRLYSG…LHRHGSDPGS (495 aa)) the chain is Cytoplasmic. The interval 742–842 (PFRGATKGCL…IHRDDLLEVL (101 aa)) is cNMP-binding domain. A disordered region spans residues 870–985 (GSPGSTELEG…DVEKSSDTCN (116 aa)). Phosphoserine occurs at positions 871 and 874. Basic residues predominate over residues 883-892 (RQRKRKLSFR). A compositionally biased stretch (gly residues) spans 916-927 (GPSGRGQQGGPW). Over residues 928–939 (GESLSSGPSSPE) the composition is skewed to low complexity. R1014 carries the post-translational modification Omega-N-methylarginine. Residues 1037–1064 (RGDVESRLDALQRQLNRLETRLSADMAT) adopt a coiled-coil conformation. The segment at 1125–1154 (DGPARRLSLPGQLGALTSQPLHRHGSDPGS) is disordered. S1132 is modified (phosphoserine).

The protein belongs to the potassium channel family. H (Eag) (TC 1.A.1.20) subfamily. Kv11.1/KCNH2 sub-subfamily. As to quaternary structure, the potassium channel is probably composed of a homo- or heterotetrameric complex of pore-forming alpha subunits that can associate with modulating beta subunits. Interacts with DNAJB12 and DNAJB14; chaperones DNAJB12 and DNAJB14 promote tetramerization. Heteromultimer with KCNH6/ERG2 and KCNH7/ERG3. Interacts with ALG10B. Forms a stable complex with KCNE1 or KCNE2, and that this heteromultimerization regulates Inward rectifier potassium channel activity. Interacts with CANX. The core-glycosylated, but not the fully glycosylated form interacts with RNF207. Interacts with NDFIP1 and NDFIP2; this interaction decreases the cell membrane expression by targeting KCNH2, through interaction with NEDD4L, for the degradation through the multivesicular bodies (MVBs)-lysosomal pathway. Phosphorylated on serine and threonine residues. Phosphorylation by PKA inhibits ion conduction.

Its subcellular location is the cell membrane. It carries out the reaction K(+)(in) = K(+)(out). Pore-forming (alpha) subunit of voltage-gated inwardly rectifying potassium channel. Characterized by unusual gating kinetics by producing relatively small outward currents during membrane depolarization and large inward currents during subsequent repolarization which reflect a rapid inactivation during depolarization and quick recovery from inactivation but slow deactivation (closing) during repolarization. Channel properties are modulated by cAMP and subunit assembly. Forms a stable complex with KCNE1 or KCNE2, and that this heteromultimerization regulates inward rectifier potassium channel activity. The polypeptide is Voltage-gated inwardly rectifying potassium channel KCNH2 (Sus scrofa (Pig)).